A 271-amino-acid polypeptide reads, in one-letter code: L-aspartate dehydrogenase (271 aa).

Residues Ala-124 and Asn-192 each contribute to the NAD(+) site. The active site involves His-222.

This sequence belongs to the L-aspartate dehydrogenase family.

It carries out the reaction L-aspartate + NADP(+) + H2O = oxaloacetate + NH4(+) + NADPH + H(+). It catalyses the reaction L-aspartate + NAD(+) + H2O = oxaloacetate + NH4(+) + NADH + H(+). The protein operates within cofactor biosynthesis; NAD(+) biosynthesis; iminoaspartate from L-aspartate (dehydrogenase route): step 1/1. Specifically catalyzes the NAD or NADP-dependent dehydrogenation of L-aspartate to iminoaspartate. The sequence is that of L-aspartate dehydrogenase from Methanococcoides burtonii (strain DSM 6242 / NBRC 107633 / OCM 468 / ACE-M).